The primary structure comprises 238 residues: Ribonuclease PH (238 aa).

Phosphate contacts are provided by residues Arg-86 and 124–126 (GTR).

It belongs to the RNase PH family. As to quaternary structure, homohexameric ring arranged as a trimer of dimers.

It catalyses the reaction tRNA(n+1) + phosphate = tRNA(n) + a ribonucleoside 5'-diphosphate. Its function is as follows. Phosphorolytic 3'-5' exoribonuclease that plays an important role in tRNA 3'-end maturation. Removes nucleotide residues following the 3'-CCA terminus of tRNAs; can also add nucleotides to the ends of RNA molecules by using nucleoside diphosphates as substrates, but this may not be physiologically important. Probably plays a role in initiation of 16S rRNA degradation (leading to ribosome degradation) during starvation. This chain is Ribonuclease PH, found in Histophilus somni (strain 2336) (Haemophilus somnus).